We begin with the raw amino-acid sequence, 97 residues long: Acylphosphatase (97 aa).

One can recognise an Acylphosphatase-like domain in the interval 9 to 97; the sequence is RKHIVVTGLV…ETARAFGVRQ (89 aa). Catalysis depends on residues arginine 24 and asparagine 42.

This sequence belongs to the acylphosphatase family.

The catalysed reaction is an acyl phosphate + H2O = a carboxylate + phosphate + H(+). The sequence is that of Acylphosphatase (acyP) from Bifidobacterium longum (strain NCC 2705).